The sequence spans 184 residues: Elongation factor P (184 aa).

This sequence belongs to the elongation factor P family.

The protein resides in the cytoplasm. The protein operates within protein biosynthesis; polypeptide chain elongation. Functionally, involved in peptide bond synthesis. Stimulates efficient translation and peptide-bond synthesis on native or reconstituted 70S ribosomes in vitro. Probably functions indirectly by altering the affinity of the ribosome for aminoacyl-tRNA, thus increasing their reactivity as acceptors for peptidyl transferase. The chain is Elongation factor P from Verminephrobacter eiseniae (strain EF01-2).